Consider the following 58-residue polypeptide: Large ribosomal subunit protein bL32c (58 aa).

Over residues 1 to 19 (MAVPKKRKSKMKTRLRKAQ) the composition is skewed to basic residues. The segment at 1–25 (MAVPKKRKSKMKTRLRKAQWKSEAS) is disordered.

The protein belongs to the bacterial ribosomal protein bL32 family.

It is found in the plastid. The protein resides in the chloroplast. This is Large ribosomal subunit protein bL32c (rpl32) from Chlorella vulgaris (Green alga).